Consider the following 993-residue polypeptide: Signal peptide, CUB and EGF-like domain-containing protein 3 (993 aa).

The signal sequence occupies residues 1–20; it reads MGSGRVPGLCLLLLLVHARA. The region spanning 29 to 69 is the EGF-like 1; calcium-binding domain; it reads DVDECVEGTDNCHIDAICQNTPRSYKCICKSGYTGDGKHCK. Cystine bridges form between Cys33-Cys46, Cys40-Cys55, Cys57-Cys68, Cys74-Cys86, Cys82-Cys95, Cys97-Cys110, Cys116-Cys127, Cys123-Cys136, Cys161-Cys172, Cys168-Cys182, Cys184-Cys197, Cys201-Cys212, Cys208-Cys221, Cys223-Cys236, Cys240-Cys251, Cys247-Cys260, Cys262-Cys275, Cys281-Cys292, Cys288-Cys301, Cys303-Cys316, Cys322-Cys332, Cys328-Cys341, Cys343-Cys355, Cys361-Cys372, Cys368-Cys381, and Cys383-Cys397. The EGF-like 2; calcium-binding domain occupies 70 to 111; sequence DVDECEREDNAGCVHDCVNIPGNYRCTCYDGFHLAHDGHNCL. Positions 112–148 constitute an EGF-like 3; calcium-binding domain; it reads DVDECAEGNGGCQQSCVNMMGSYECHCRDGFFLSDNQ. EGF-like domains lie at 157 to 198, 199 to 237, and 238 to 276; these read EGMN…RDCK, LTCN…KTCI, and ETCA…KTCK. In terms of domain architecture, EGF-like 7; calcium-binding spans 277 to 317; that stretch reads DIDECRLNNGGCDHICRNTVGSFECSCKKGYKLLINERSCQ. The region spanning 318-356 is the EGF-like 8; calcium-binding domain; that stretch reads DIDECSFDRTCDHMCVNTPGSFQCLCHRGYLLYGVTHCG. Positions 357-398 constitute an EGF-like 9; calcium-binding domain; it reads DVDECSINKGGCRFGCINTPGSYQCTCPAGQGRLHWNGKDCT. 5 N-linked (GlcNAc...) asparagine glycosylation sites follow: Asn417, Asn464, Asn685, Asn756, and Asn785. Disulfide bonds link Cys804-Cys830 and Cys857-Cys878. A CUB domain is found at 804-916; that stretch reads CGGELGEFTG…RGFQIPYVTY (113 aa).

In terms of assembly, forms homooligomers. Forms heterooligomers with SCUBE1 and SCUBE2. Interacts with TGFBR2 through the CUB domain; this interaction does not affect TGFB1-binding to TGFBR2. Interacts with BMP2, BMP4 and BMP7; the interaction is mediated by the CUB domain. Interacts with BMPR1A, BMPR1B and BMPR2; the interaction with BMPR1A and BMPR1B is BMP2- and BMP4-dependent. Post-translationally, N-glycosylated. In terms of processing, proteolytic cleavage produces a CUB-containing C-terminal fragment that retains the ability to bind to TGFBR2. This reaction is catalyzed in vitro by MMP2 and, to a lesser extent, by MMP9. Highly expressed in femur and humerus with little or no expression in non-bone tissues.

The protein localises to the secreted. It localises to the cell surface. Functionally, is a positive regulator of the BMP signaling pathway, required for proper chondrogenesis, osteogenesis and skeletal development. It acts as a coreceptor for BMP ligands, particularly BMP2 and BMP4, facilitating their interactions with BMP type I receptors. It is required for ligand-induced recruitment of BMP receptors to lipid rafts. Binds to TGFBR2 and activates TGFB signaling. This chain is Signal peptide, CUB and EGF-like domain-containing protein 3, found in Mus musculus (Mouse).